A 423-amino-acid polypeptide reads, in one-letter code: 26S proteasome regulatory subunit 6A homolog B (423 aa).

Phosphoserine is present on Ser18. 211–218 lines the ATP pocket; it reads GPPGTGKT. Glycyl lysine isopeptide (Lys-Gly) (interchain with G-Cter in ubiquitin) cross-links involve residues Lys234, Lys278, and Lys415.

This sequence belongs to the AAA ATPase family. In terms of assembly, component of the 19S regulatory particle (RP/PA700) base subcomplex of the 26S proteasome. The 26S proteasome is composed of a core protease (CP), known as the 20S proteasome, capped at one or both ends by the 19S regulatory particle (RP/PA700). The RP/PA700 complex is composed of at least 17 different subunits in two subcomplexes, the base and the lid, which form the portions proximal and distal to the 20S proteolytic core, respectively.

It localises to the cytoplasm. The protein localises to the nucleus. In terms of biological role, the 26S proteasome is involved in the ATP-dependent degradation of ubiquitinated proteins. The regulatory (or ATPase) complex confers ATP dependency and substrate specificity to the 26S complex. The protein is 26S proteasome regulatory subunit 6A homolog B (RPT5B) of Arabidopsis thaliana (Mouse-ear cress).